We begin with the raw amino-acid sequence, 347 residues long: tRNA N6-adenosine threonylcarbamoyltransferase (347 aa).

Positions 115 and 119 each coordinate Fe cation. Residues Leu138–Gly142, Asp171, Gly184, and Asn277 each bind substrate. Fe cation is bound at residue Asp305.

Belongs to the KAE1 / TsaD family. It depends on Fe(2+) as a cofactor.

The protein resides in the cytoplasm. It carries out the reaction L-threonylcarbamoyladenylate + adenosine(37) in tRNA = N(6)-L-threonylcarbamoyladenosine(37) in tRNA + AMP + H(+). Required for the formation of a threonylcarbamoyl group on adenosine at position 37 (t(6)A37) in tRNAs that read codons beginning with adenine. Is involved in the transfer of the threonylcarbamoyl moiety of threonylcarbamoyl-AMP (TC-AMP) to the N6 group of A37, together with TsaE and TsaB. TsaD likely plays a direct catalytic role in this reaction. The sequence is that of tRNA N6-adenosine threonylcarbamoyltransferase from Polaromonas sp. (strain JS666 / ATCC BAA-500).